We begin with the raw amino-acid sequence, 380 residues long: Chaperone protein DnaJ (380 aa).

The 65-residue stretch at 5-69 (DYYEILGVSK…QKRAHYDQFG (65 aa)) folds into the J domain. The CR-type zinc-finger motif lies at 135–217 (GKETDIEIPR…CGGTGRVKRR (83 aa)). Zn(2+) is bound by residues Cys148, Cys151, Cys165, Cys168, Cys191, Cys194, Cys205, and Cys208. CXXCXGXG motif repeat units follow at residues 148–155 (CNTCHGTG), 165–172 (CSYCHGTG), 191–198 (CPYCGGTG), and 205–212 (CTTCGGTG).

The protein belongs to the DnaJ family. Homodimer. It depends on Zn(2+) as a cofactor.

It localises to the cytoplasm. Functionally, participates actively in the response to hyperosmotic and heat shock by preventing the aggregation of stress-denatured proteins and by disaggregating proteins, also in an autonomous, DnaK-independent fashion. Unfolded proteins bind initially to DnaJ; upon interaction with the DnaJ-bound protein, DnaK hydrolyzes its bound ATP, resulting in the formation of a stable complex. GrpE releases ADP from DnaK; ATP binding to DnaK triggers the release of the substrate protein, thus completing the reaction cycle. Several rounds of ATP-dependent interactions between DnaJ, DnaK and GrpE are required for fully efficient folding. Also involved, together with DnaK and GrpE, in the DNA replication of plasmids through activation of initiation proteins. In Parageobacillus thermoglucosidasius (Geobacillus thermoglucosidasius), this protein is Chaperone protein DnaJ.